Consider the following 138-residue polypeptide: Large-conductance mechanosensitive channel (138 aa).

Transmembrane regions (helical) follow at residues 19-39 (VGVI…GDII), 40-60 (MPII…IPLA), and 81-101 (GSFL…FMVI).

This sequence belongs to the MscL family. As to quaternary structure, homopentamer.

It localises to the cell inner membrane. Its function is as follows. Channel that opens in response to stretch forces in the membrane lipid bilayer. May participate in the regulation of osmotic pressure changes within the cell. This chain is Large-conductance mechanosensitive channel, found in Bradyrhizobium sp. (strain ORS 278).